Reading from the N-terminus, the 1267-residue chain is DNA-directed RNA polymerase subunit beta (1267 aa).

Belongs to the RNA polymerase beta chain family. The RNAP catalytic core consists of 2 alpha, 1 beta, 1 beta' and 1 omega subunit. When a sigma factor is associated with the core the holoenzyme is formed, which can initiate transcription.

It catalyses the reaction RNA(n) + a ribonucleoside 5'-triphosphate = RNA(n+1) + diphosphate. Functionally, DNA-dependent RNA polymerase catalyzes the transcription of DNA into RNA using the four ribonucleoside triphosphates as substrates. The sequence is that of DNA-directed RNA polymerase subunit beta (rpoB) from Carsonella ruddii (strain PV).